A 195-amino-acid chain; its full sequence is Probable GTP-binding protein EngB (195 aa).

Residues 24 to 195 enclose the EngB-type G domain; the sequence is ELPEIALAGR…EAWDAILEKL (172 aa). GTP-binding positions include 32–39, 59–63, 77–80, 144–147, and 176–178; these read GRSNVGKS, GKTQL, DVPG, TKAD, and FSS. Mg(2+) is bound by residues serine 39 and threonine 61.

This sequence belongs to the TRAFAC class TrmE-Era-EngA-EngB-Septin-like GTPase superfamily. EngB GTPase family. Requires Mg(2+) as cofactor.

Necessary for normal cell division and for the maintenance of normal septation. The polypeptide is Probable GTP-binding protein EngB (Streptococcus pneumoniae (strain P1031)).